The chain runs to 283 residues: N-terminal Xaa-Pro-Lys N-methyltransferase 2 (283 aa).

Residues Gly-124, Arg-129, Asp-146, 174–175 (LQ), and Gln-190 contribute to the S-adenosyl-L-methionine site.

It belongs to the methyltransferase superfamily. NTM1 family.

The protein localises to the nucleus. The enzyme catalyses N-terminal L-alanyl-L-prolyl-L-lysyl-[protein] + S-adenosyl-L-methionine = N-terminal N-methyl-L-alanyl-L-prolyl-L-lysyl-[protein] + S-adenosyl-L-homocysteine + H(+). It catalyses the reaction N-terminal L-prolyl-L-prolyl-L-lysyl-[protein] + S-adenosyl-L-methionine = N-terminal N-methyl-L-prolyl-L-prolyl-L-lysyl-[protein] + S-adenosyl-L-homocysteine + H(+). It carries out the reaction N-terminal L-seryl-L-prolyl-L-lysyl-[protein] + S-adenosyl-L-methionine = N-terminal N-methyl-L-seryl-L-prolyl-L-lysyl-[protein] + S-adenosyl-L-homocysteine + H(+). Alpha N-methyltransferase that methylates the N-terminus of target proteins containing the N-terminal motif [Ala/Pro/Ser]-Pro-Lys when the initiator Met is cleaved. Specifically catalyzes monomethylation of exposed alpha-amino group of Ala or Ser residue in the [Ala/Ser]-Pro-Lys motif and Pro in the Pro-Pro-Lys motif. Predominantly functions as a mono-methyltransferase but is also able to di-/tri-methylate the GPKRIA peptide and di-methylate the PPKRIA peptide (in vitro). May activate NTMT1 by priming its substrates for trimethylation. This chain is N-terminal Xaa-Pro-Lys N-methyltransferase 2 (Ntmt2), found in Mus musculus (Mouse).